The chain runs to 441 residues: Probable indole-3-acetic acid-amido synthetase GH3.9 (441 aa).

This sequence belongs to the IAA-amido conjugating enzyme family. As to expression, expressed in etiolated seedlings and roots.

In terms of biological role, may catalyze the synthesis of indole-3-acetic acid (IAA)-amino acid conjugates, providing a mechanism for the plant to cope with the presence of excess auxin. This is Probable indole-3-acetic acid-amido synthetase GH3.9 (GH3.9) from Oryza sativa subsp. japonica (Rice).